An 83-amino-acid polypeptide reads, in one-letter code: Small ribosomal subunit protein bS16 (83 aa).

The protein belongs to the bacterial ribosomal protein bS16 family.

The polypeptide is Small ribosomal subunit protein bS16 (Albidiferax ferrireducens (strain ATCC BAA-621 / DSM 15236 / T118) (Rhodoferax ferrireducens)).